The sequence spans 160 residues: 2-C-methyl-D-erythritol 2,4-cyclodiphosphate synthase (160 aa).

Residues Asp9 and His11 each coordinate a divalent metal cation. 4-CDP-2-C-methyl-D-erythritol 2-phosphate is bound by residues Asp9–His11 and His35–Ser36. His43 is an a divalent metal cation binding site. 4-CDP-2-C-methyl-D-erythritol 2-phosphate-binding positions include Asp57–Gly59, Phe62–Asp66, and Phe140.

This sequence belongs to the IspF family. Homotrimer. A divalent metal cation serves as cofactor.

It carries out the reaction 4-CDP-2-C-methyl-D-erythritol 2-phosphate = 2-C-methyl-D-erythritol 2,4-cyclic diphosphate + CMP. The protein operates within isoprenoid biosynthesis; isopentenyl diphosphate biosynthesis via DXP pathway; isopentenyl diphosphate from 1-deoxy-D-xylulose 5-phosphate: step 4/6. Involved in the biosynthesis of isopentenyl diphosphate (IPP) and dimethylallyl diphosphate (DMAPP), two major building blocks of isoprenoid compounds. Catalyzes the conversion of 4-diphosphocytidyl-2-C-methyl-D-erythritol 2-phosphate (CDP-ME2P) to 2-C-methyl-D-erythritol 2,4-cyclodiphosphate (ME-CPP) with a corresponding release of cytidine 5-monophosphate (CMP). This Fusobacterium nucleatum subsp. nucleatum (strain ATCC 25586 / DSM 15643 / BCRC 10681 / CIP 101130 / JCM 8532 / KCTC 2640 / LMG 13131 / VPI 4355) protein is 2-C-methyl-D-erythritol 2,4-cyclodiphosphate synthase.